A 525-amino-acid chain; its full sequence is GMP synthase [glutamine-hydrolyzing] (525 aa).

One can recognise a Glutamine amidotransferase type-1 domain in the interval 9 to 207; it reads RILILDFGSQ…VLDICACEAL (199 aa). Cysteine 86 functions as the Nucleophile in the catalytic mechanism. Residues histidine 181 and glutamate 183 contribute to the active site. A GMPS ATP-PPase domain is found at 208 to 400; sequence WTPATIIEDA…LGLPYDMLYR (193 aa). 235 to 241 provides a ligand contact to ATP; sequence SGGVDSS.

In terms of assembly, homodimer.

It catalyses the reaction XMP + L-glutamine + ATP + H2O = GMP + L-glutamate + AMP + diphosphate + 2 H(+). Its pathway is purine metabolism; GMP biosynthesis; GMP from XMP (L-Gln route): step 1/1. Its function is as follows. Catalyzes the synthesis of GMP from XMP. The sequence is that of GMP synthase [glutamine-hydrolyzing] from Yersinia enterocolitica serotype O:8 / biotype 1B (strain NCTC 13174 / 8081).